Here is a 372-residue protein sequence, read N- to C-terminus: Cell division protein FtsZ 1 (372 aa).

GTP-binding positions include glycine 51–asparagine 55, glycine 138–glycine 140, glutamate 169, arginine 173, and aspartate 216. Over residues proline 350–glutamate 360 the composition is skewed to acidic residues. Positions proline 350 to leucine 372 are disordered. Low complexity predominate over residues glutamate 361–leucine 372.

The protein belongs to the FtsZ family. In terms of assembly, homodimer. Polymerizes to form a dynamic ring structure in a strictly GTP-dependent manner. Interacts directly with several other division proteins.

The protein resides in the cytoplasm. Functionally, essential cell division protein that forms a contractile ring structure (Z ring) at the future cell division site. The regulation of the ring assembly controls the timing and the location of cell division. One of the functions of the FtsZ ring is to recruit other cell division proteins to the septum to produce a new cell wall between the dividing cells. Binds GTP and shows GTPase activity. In Pyrococcus furiosus (strain ATCC 43587 / DSM 3638 / JCM 8422 / Vc1), this protein is Cell division protein FtsZ 1.